Consider the following 513-residue polypeptide: 2-isopropylmalate synthase (513 aa).

The 264-residue stretch at 5–268 (LIIFDTTLRD…DVGVDTTQIV (264 aa)) folds into the Pyruvate carboxyltransferase domain. Aspartate 14, histidine 202, histidine 204, and asparagine 239 together coordinate Mn(2+). The segment at 394-513 (RFVSLSQRSE…KSSEKLNPQI (120 aa)) is regulatory domain.

It belongs to the alpha-IPM synthase/homocitrate synthase family. LeuA type 1 subfamily. In terms of assembly, homodimer. The cofactor is Mn(2+).

It is found in the cytoplasm. The catalysed reaction is 3-methyl-2-oxobutanoate + acetyl-CoA + H2O = (2S)-2-isopropylmalate + CoA + H(+). The protein operates within amino-acid biosynthesis; L-leucine biosynthesis; L-leucine from 3-methyl-2-oxobutanoate: step 1/4. Its function is as follows. Catalyzes the condensation of the acetyl group of acetyl-CoA with 3-methyl-2-oxobutanoate (2-ketoisovalerate) to form 3-carboxy-3-hydroxy-4-methylpentanoate (2-isopropylmalate). This Ralstonia nicotianae (strain ATCC BAA-1114 / GMI1000) (Ralstonia solanacearum) protein is 2-isopropylmalate synthase.